Consider the following 1074-residue polypeptide: DNA double-strand break repair Rad50 ATPase (1074 aa).

ATP contacts are provided by residues Arg-12, 32 to 38, and Gln-142; that span reads NGSGKSS. 2 coiled-coil regions span residues 355–402 and 452–506; these read ELEK…REKA and NLVE…KGLG. Positions 512–611 constitute a Zinc-hook domain; that stretch reads LENLEDFSEL…KITRLKDAKK (100 aa). Zn(2+) is bound by residues Cys-559 and Cys-562. Coiled-coil stretches lie at residues 574-611, 649-678, 749-823, and 865-895; these read TAEE…DAKK, LKLE…LQVQ, KEKL…EILE, and TEEK…LKAL. Residue 973–978 participates in ATP binding; the sequence is LLSGGE.

This sequence belongs to the SMC family. RAD50 subfamily. In terms of assembly, homodimer. Forms a heterotetramer composed of two Mre11 subunits and two Rad50 subunits. The cofactor is Zn(2+).

Functionally, part of the Rad50/Mre11 complex, which is involved in the early steps of DNA double-strand break (DSB) repair. The complex may facilitate opening of the processed DNA ends to aid in the recruitment of HerA and NurA. Rad50 controls the balance between DNA end bridging and DNA resection via ATP-dependent structural rearrangements of the Rad50/Mre11 complex. This is DNA double-strand break repair Rad50 ATPase from Methanosarcina acetivorans (strain ATCC 35395 / DSM 2834 / JCM 12185 / C2A).